A 1450-amino-acid chain; its full sequence is Auxilin-like protein 1 (1450 aa).

Disordered regions lie at residues Asn117 to Ser142, Ser241 to Ser318, Asp357 to Leu383, Asn459 to Glu480, Ser512 to Met541, Glu556 to Glu575, Asp908 to Phe946, Glu961 to His1046, Gly1077 to Gln1168, Ala1192 to Ala1241, and Ala1254 to Ala1328. Positions Glu316 to Ser344 form a coiled coil. Residues Asp357 to Thr366 are compositionally biased toward basic and acidic residues. Basic and acidic residues-rich tracts occupy residues Ser512–Asn524, Ser564–Glu575, Asp908–Gln923, Arg1037–His1046, Asn1117–Met1131, Glu1147–Gln1168, and Ala1192–Ser1226. Coiled-coil stretches lie at residues Ser1142–Ala1184 and Glu1219–Lys1257. The span at Ser1270–Ser1299 shows a compositional bias: low complexity. Residues Pro1310–Ala1328 are compositionally biased toward basic and acidic residues. Residues Arg1327–Ala1355 are a coiled coil. One can recognise a J domain in the interval Thr1377 to Arg1450.

In Arabidopsis thaliana (Mouse-ear cress), this protein is Auxilin-like protein 1 (AUL1).